The primary structure comprises 287 residues: Large ribosomal subunit protein uL2 (287 aa).

The interval 220-287 is disordered; that stretch reads VRGSVMNPCD…SKRSRGGRDS (68 aa). The segment covering 271 to 287 has biased composition (basic residues); that stretch reads VRRRRRISKRSRGGRDS.

The protein belongs to the universal ribosomal protein uL2 family. In terms of assembly, part of the 50S ribosomal subunit. Forms a bridge to the 30S subunit in the 70S ribosome.

Its function is as follows. One of the primary rRNA binding proteins. Required for association of the 30S and 50S subunits to form the 70S ribosome, for tRNA binding and peptide bond formation. It has been suggested to have peptidyltransferase activity; this is somewhat controversial. Makes several contacts with the 16S rRNA in the 70S ribosome. This Prochlorococcus marinus (strain MIT 9515) protein is Large ribosomal subunit protein uL2.